Consider the following 469-residue polypeptide: Lipase A (469 aa).

An N-terminal signal peptide occupies residues M1–G22. Positions P40–G51 are enriched in pro residues. Positions P40–T59 are disordered. An N-linked (GlcNAc...) asparagine glycan is attached at N111. A disulfide bridge connects residues C129 and C304. Residues S217, D361, and H393 each act as charge relay system in the active site. C377 and C421 are joined by a disulfide.

It belongs to the AB hydrolase superfamily. Lipase family. Class Lip subfamily. In terms of assembly, monomer.

The protein localises to the secreted. The catalysed reaction is a triacylglycerol + H2O = a diacylglycerol + a fatty acid + H(+). Hydrolyzes triglycerides, with a preference for substrates with short-chain lengths (C4 to C8). The protein is Lipase A of Arthroderma benhamiae (strain ATCC MYA-4681 / CBS 112371) (Trichophyton mentagrophytes).